The chain runs to 149 residues: Transcriptional repressor NrdR (149 aa).

The segment at 3–34 is a zinc-finger region; the sequence is CPYCSYEESKVVDSRSAEDYNAIRRRRECLRC. The ATP-cone domain maps to 49 to 139; sequence ILVIKKDLSR…VYRQFKDINT (91 aa).

This sequence belongs to the NrdR family. Zn(2+) is required as a cofactor.

In terms of biological role, negatively regulates transcription of bacterial ribonucleotide reductase nrd genes and operons by binding to NrdR-boxes. The protein is Transcriptional repressor NrdR of Clostridium perfringens (strain SM101 / Type A).